We begin with the raw amino-acid sequence, 607 residues long: UvrABC system protein C (607 aa).

Residues 11-89 (CKPGVYRFED…IKEFAPPCNV (79 aa)) enclose the GIY-YIG domain. Positions 201-236 (SSLLESLKKKMLKASKNKEYEEAAILRDKIQAAQTV) constitute a UVR domain.

It belongs to the UvrC family. As to quaternary structure, interacts with UvrB in an incision complex.

The protein localises to the cytoplasm. In terms of biological role, the UvrABC repair system catalyzes the recognition and processing of DNA lesions. UvrC both incises the 5' and 3' sides of the lesion. The N-terminal half is responsible for the 3' incision and the C-terminal half is responsible for the 5' incision. The sequence is that of UvrABC system protein C from Tropheryma whipplei (strain TW08/27) (Whipple's bacillus).